Here is a 109-residue protein sequence, read N- to C-terminus: Transmembrane protein 233 (109 aa).

Residues 1-30 (MSQYAPSPDFKRALDSSPEANTEDDKTEED) are disordered. At 1–41 (MSQYAPSPDFKRALDSSPEANTEDDKTEEDVPMPKNYLWLT) the chain is on the cytoplasmic side. The span at 21–30 (NTEDDKTEED) shows a compositional bias: acidic residues. Residues 42-62 (IVSCFCPAYPINIVALVFSIM) constitute an intramembrane region (helical). Topologically, residues 63 to 84 (SLNSYNDGDYEGARRLGRNAKW) are cytoplasmic. Residues 85–105 (VAIASIIIGLLIIGISCAVHF) form a helical membrane-spanning segment. Topologically, residues 106–109 (TRNA) are extracellular.

The protein belongs to the CD225/Dispanin family. Interacts with the giant stinging tree toxin ExTxA (AC P0DQP3). Interacts with Nav1.7/SCN9A. Interacts with Nav1.1/SCN1A, Nav1.2/SCN2A, Nav1.3/SCN3A, Nav1.4/SCN4A, Nav1.5/SCN5A, and Nav1.6/SCN8A.

Its subcellular location is the cell membrane. Probable accessory protein of voltage-gated sodium channels. This Homo sapiens (Human) protein is Transmembrane protein 233.